The primary structure comprises 319 residues: Formimidoylglutamase (319 aa).

Residues His131, Asp154, His156, Asp158, Cys248, and Asp250 each coordinate Mn(2+).

Belongs to the arginase family. Mn(2+) serves as cofactor.

The enzyme catalyses N-formimidoyl-L-glutamate + H2O = formamide + L-glutamate. It functions in the pathway amino-acid degradation; L-histidine degradation into L-glutamate; L-glutamate from N-formimidoyl-L-glutamate (hydrolase route): step 1/1. Functionally, catalyzes the conversion of N-formimidoyl-L-glutamate to L-glutamate and formamide. The chain is Formimidoylglutamase from Legionella pneumophila subsp. pneumophila (strain Philadelphia 1 / ATCC 33152 / DSM 7513).